The primary structure comprises 470 residues: MTLADAQPQALDFECETGNYHTFCPISCVAWLYQKIEDSFFLVIGTKTCGYFLQNAMGVMIFAEPRYAMAELEEGDISAKLNDYEELKRLCMQIKRDRNPSVIVWIGTCTTEIIKMDLEGLAPRLESEIDIPIVVARANGLDYAFTQGEDTVLAAMAHRCPKGSAVVEESEKQERGNAITSLLNFGKKKEEVVAEESEYHDHAPLVMFGSLPDPVVTQLTLELKKQGIKVNGWLPAKRFTELPVIDEGYYVAGVNPFLSRTATTLMRRRKCKLIGAPFPIGPDGTRAWIEKICSVLDVEPKGLEEREAKIWANLEDYLEIIRGKSVFFMGDNLLEVSLARFLIRCGMTCPEIGIPYMDKRYQGAELKFLEQTCIDMGVPMPKIVEKPDNYNQVQRIYEHDVDLVITGMAHANPLEARGINTKWSVEFTFAQIHGFTNARDILELVTRPLRRNNSLKDLGWDKLVKEEAKV.

Positions 24, 49, and 109 each coordinate [4Fe-4S] cluster.

This sequence belongs to the BchN/ChlN family. As to quaternary structure, protochlorophyllide reductase is composed of three subunits; ChlL, ChlN and ChlB. Forms a heterotetramer of two ChlB and two ChlN subunits. Requires [4Fe-4S] cluster as cofactor.

The catalysed reaction is chlorophyllide a + oxidized 2[4Fe-4S]-[ferredoxin] + 2 ADP + 2 phosphate = protochlorophyllide a + reduced 2[4Fe-4S]-[ferredoxin] + 2 ATP + 2 H2O. It functions in the pathway porphyrin-containing compound metabolism; chlorophyll biosynthesis (light-independent). Component of the dark-operative protochlorophyllide reductase (DPOR) that uses Mg-ATP and reduced ferredoxin to reduce ring D of protochlorophyllide (Pchlide) to form chlorophyllide a (Chlide). This reaction is light-independent. The NB-protein (ChlN-ChlB) is the catalytic component of the complex. The sequence is that of Light-independent protochlorophyllide reductase subunit N from Acaryochloris marina (strain MBIC 11017).